The chain runs to 235 residues: Orotidine 5'-phosphate decarboxylase (235 aa).

Residues Asp12, Lys34, 61–70, Thr116, Arg177, Gln186, Gly206, and Arg207 each bind substrate; that span reads DMKLLDIDNT. Lys63 (proton donor) is an active-site residue.

The protein belongs to the OMP decarboxylase family. Type 1 subfamily. As to quaternary structure, homodimer.

The catalysed reaction is orotidine 5'-phosphate + H(+) = UMP + CO2. The protein operates within pyrimidine metabolism; UMP biosynthesis via de novo pathway; UMP from orotate: step 2/2. Functionally, catalyzes the decarboxylation of orotidine 5'-monophosphate (OMP) to uridine 5'-monophosphate (UMP). The protein is Orotidine 5'-phosphate decarboxylase of Rhizobium etli (strain ATCC 51251 / DSM 11541 / JCM 21823 / NBRC 15573 / CFN 42).